The chain runs to 2476 residues: Non-reducing polyketide synthase pkdA (2476 aa).

The N-terminal acylcarrier protein transacylase domain (SAT) stretch occupies residues 22–230 (PNLNDAYLQS…VISEARLATL (209 aa)). Cysteine 142 (nucleophile; for transacylase activity) is an active-site residue. The active-site Proton donor/acceptor; for transacylase activity is histidine 261. Positions 388-805 (DESIAVVGMA…GSNASLVVTQ (418 aa)) constitute a Ketosynthase family 3 (KS3) domain. Active-site for beta-ketoacyl synthase activity residues include cysteine 554, histidine 689, and histidine 728. The interval 919–1204 (FGGQRSSFVG…GSGVTNLASR (286 aa)) is malonyl-CoA:ACP transacylase (MAT). An N-terminal hotdog fold region spans residues 1290-1417 (QKGLWTFVGY…GRITFQTPKQ (128 aa)). The region spanning 1290 to 1592 (QKGLWTFVGY…FVEVSIAGMS (303 aa)) is the PKS/mFAS DH domain. The segment at 1321-1590 (YVSAHVIAQT…LHFVEVSIAG (270 aa)) is product template (PT) domain. Histidine 1325 acts as the Proton acceptor; for dehydratase activity in catalysis. The interval 1445 to 1592 (QTIQGSRNIY…FVEVSIAGMS (148 aa)) is C-terminal hotdog fold. Aspartate 1501 functions as the Proton donor; for dehydratase activity in the catalytic mechanism. The tract at residues 1626-1649 (DVSKNEKDAKAPSKKKESTSKSPG) is disordered. One can recognise a Carrier domain in the interval 1650-1724 (HDILARVRTL…SLVKCIGANM (75 aa)). At serine 1684 the chain carries O-(pantetheine 4'-phosphoryl)serine. A disordered region spans residues 1727-1766 (SDTSRTGDDSSDDLETASAESETSSGINNEDSHNIDRQQI). Residues 1742–1751 (TASAESETSS) are compositionally biased toward low complexity. Positions 1881–2030 (ELLRQYPEHA…DCEKTPSSHL (150 aa)) are methyltransferase (CMeT) domain. Positions 2094-2340 (VTGATGSLGS…SWCPVDDVAA (247 aa)) are NADPH-binding domain.

Requires pantetheine 4'-phosphate as cofactor.

It catalyses the reaction propanoyl-CoA + 3 malonyl-CoA + AH2 + 2 S-adenosyl-L-methionine + H(+) = 2-ethyl-4,6-dihydroxy-3,5-dimethylbenzaldehyde + A + 2 S-adenosyl-L-homocysteine + 3 CO2 + 4 CoA + H2O. It participates in secondary metabolite biosynthesis. Non-reducing polyketide synthase that synthesizes 6-ethyl-2,4-dihydroxy-3,5-dimethylbenzaldehyde via condensation of one propanoyl-CoA starter unit with 3 malonyl-CoA units, as well as 2 methylation steps. This is Non-reducing polyketide synthase pkdA from Emericella nidulans (strain FGSC A4 / ATCC 38163 / CBS 112.46 / NRRL 194 / M139) (Aspergillus nidulans).